Here is a 663-residue protein sequence, read N- to C-terminus: Polyunsaturated fatty acid lipoxygenase ALOX12 (663 aa).

The PLAT domain maps to Gly-2–Arg-114. The Lipoxygenase domain occupies Leu-115–Ile-663. Ser-246 carries the post-translational modification Phosphoserine. Fe cation is bound by residues His-360, His-365, His-540, Asn-544, and Ile-663.

This sequence belongs to the lipoxygenase family. It depends on Fe cation as a cofactor. Found primarily in platelets and in microsomal and cytosolic fractions of the epidermis (at protein level).

The protein localises to the cytoplasm. The protein resides in the cytosol. Its subcellular location is the membrane. The enzyme catalyses (5Z,8Z,11Z,14Z)-eicosatetraenoate + O2 = (12S)-hydroperoxy-(5Z,8Z,10E,14Z)-eicosatetraenoate. It catalyses the reaction (9Z,12Z)-octadecadienoate + O2 = (13S)-hydroperoxy-(9Z,11E)-octadecadienoate. The catalysed reaction is 2 leukotriene A4 + O2 + 2 H2O = 2 lipoxin A4. It carries out the reaction 2 leukotriene A4 + O2 + 2 H2O = 2 lipoxin B4. The enzyme catalyses (5Z,8Z,11Z)-eicosatrienoate + O2 = (12S)-hydroperoxy-(5Z,8Z,10E)-eicosatrienoate. It catalyses the reaction (8Z,11Z,14Z)-eicosatrienoate + O2 = (12S)-hydroperoxy-(8Z,10E,14Z)-eicosatrienoate. The catalysed reaction is (4Z,7Z,10Z,13Z,16Z,19Z)-docosahexaenoate + O2 = (14S)-hydroperoxy-(4Z,7Z,10Z,12E,16Z,19Z)-docosahexaenoate. It carries out the reaction (7S)-hydroperoxy-(4Z,8E,10Z,13Z,16Z,19Z)-docosahexaenoate + O2 = (7S,14S)-dihydroperoxy-(4Z,8E,10Z,12E,16Z,19Z)-docosahexaenoate. The enzyme catalyses (7S)-hydroperoxy-(4Z,8E,10Z,13Z,16Z,19Z)-docosahexaenoate + O2 = (7S,17S)-dihydroperoxy-(4Z,8E,10Z,13Z,15E,19Z)-docosahexaenoate. It catalyses the reaction (14R,15S)-epoxy-(5Z,8Z,11Z)-eicosatrienoate + O2 = (12S)-hydroperoxy-(14R,15S)-epoxy-(5Z,8Z,10E)-eicosatrienoate. The catalysed reaction is (14S,15R)-epoxy-(5Z,8Z,11Z)-eicosatrienoate + O2 = (12S)-hydroperoxy-(14S,15R)-epoxy-(5Z,8Z,10E)-eicosatrienoate. It carries out the reaction (5Z,8Z,11Z,14Z)-eicosatetraenoate + O2 = (15S)-hydroperoxy-(5Z,8Z,11Z,13E)-eicosatetraenoate. The enzyme catalyses (14S)-hydroperoxy-(4Z,7Z,10Z,12E,16Z,19Z)-docosahexaenoate = (13S,14S)-epoxy-(4Z,7Z,9E,11E,16Z,19Z)-docosahexaenoate + H2O. It catalyses the reaction N-(5Z,8Z,11Z,14Z)-eicosatetraenoyl-L-alanine + O2 = N-(15S)-hydroperoxy-(5Z,8Z,11Z,13E)-eicosatetraenoyl-alanine. The catalysed reaction is N-(5Z,8Z,11Z,14Z)-eicosatetraenoyl-L-alanine + O2 = N-(12S)-hydroperoxy-(5Z,8Z,10E,14Z)-eicosatetraenoyl-alanine. It carries out the reaction N-(5Z,8Z,11Z,14Z)-eicosatetraenoyl-gamma-aminobutanoate + O2 = N-(15S)-hydroperoxy-(5Z,8Z,11Z,13E)-eicosatetraenoyl-gamma-aminobutanoate. The enzyme catalyses N-(5Z,8Z,11Z,14Z)-eicosatetraenoyl-gamma-aminobutanoate + O2 = N-(12S)-hydroperoxy-(5Z,8Z,10E,14Z)-eicosatetraenoyl-gamma-aminobutanoate. It catalyses the reaction N-(5Z,8Z,11Z,14Z)-eicosatetraenoyl-glycine + O2 = N-(15S)-hydroperoxy-(5Z,8Z,11Z,13E)-eicosatetraenoyl-glycine. The catalysed reaction is N-(5Z,8Z,11Z,14Z)-eicosatetraenoyl-glycine + O2 = N-(12S)-hydroperoxy-(5Z,8Z,10E,14Z)-eicosatetraenoyl-glycine. It carries out the reaction N-(5Z,8Z,11Z,14Z)-eicosatetraenoyl-taurine + O2 = N-(12S)-hydroperoxy-(5Z,8Z,10E,14Z)-eicosatetraenoyl-taurine. The enzyme catalyses N-(5Z,8Z,11Z,14Z)-eicosatetraenoyl-taurine + O2 = N-(15S)-hydroperoxy-(5Z,8Z,11Z,13E)-eicosatetraenoyl-taurine. It catalyses the reaction (5Z,8Z,11Z,14Z,17Z)-eicosapentaenoate + O2 = (12S)-hydroperoxy-(5Z,8Z,10E,14Z,17Z)-eicosapentaenoate. The protein operates within lipid metabolism; hydroperoxy eicosatetraenoic acid biosynthesis. Activated by EGF. Arachidonic acid conversion is inhibited by (13S,14S)-epoxy-(4Z,7Z,9E,11E,16Z,19Z)-docosahexaenoate (13S,14S-epoxy-DHA). Arachidonate 12-lipoxygenase activity is decreased when PH decreases from 7.4 to 6. Its function is as follows. Catalyzes the regio and stereo-specific incorporation of molecular oxygen into free and esterified polyunsaturated fatty acids generating lipid hydroperoxides that can be further reduced to the corresponding hydroxy species. Mainly converts arachidonate ((5Z,8Z,11Z,14Z)-eicosatetraenoate) to the specific bioactive lipid (12S)-hydroperoxyeicosatetraenoate/(12S)-HPETE. Through the production of bioactive lipids like (12S)-HPETE it regulates different biological processes including platelet activation. It can also catalyze the epoxidation of double bonds of polyunsaturated fatty acids such as (14S)-hydroperoxy-docosahexaenoate/(14S)-HPDHA resulting in the formation of (13S,14S)-epoxy-DHA. Furthermore, it may participate in the sequential oxidations of DHA ((4Z,7Z,10Z,13Z,16Z,19Z)-docosahexaenoate) to generate specialized pro-resolving mediators (SPMs) like resolvin D5 ((7S,17S)-diHPDHA) and (7S,14S)-diHPDHA, that actively down-regulate the immune response and have anti-aggregation properties with platelets. An additional function involves a multistep process by which it transforms leukotriene A4/LTA4 into the bioactive lipids lipoxin A4/LXA4 and lipoxin B4/LXB4, both are vasoactive and LXA4 may regulate neutrophil function via occupancy of specific recognition sites. Can also peroxidize linoleate ((9Z,12Z)-octadecadienoate) to (13S)-hydroperoxyoctadecadienoate/ (13S-HPODE). Due to its role in regulating both the expression of the vascular endothelial growth factor (VEGF, an angiogenic factor involved in the survival and metastasis of solid tumors) and the expression of integrin beta-1 (known to affect tumor cell migration and proliferation), it can be regarded as protumorigenic. Important for cell survival, as it may play a role not only in proliferation but also in the prevention of apoptosis in vascular smooth muscle cells. This is Polyunsaturated fatty acid lipoxygenase ALOX12 (Alox12) from Mus musculus (Mouse).